A 642-amino-acid polypeptide reads, in one-letter code: Sodium- and chloride-dependent neutral and basic amino acid transporter B(0+) (642 aa).

Residues 1-44 (MDKLKCPSFFKCREKEKVSASSENFHVGENDENQDRGNWSKKSD) lie on the Cytoplasmic side of the membrane. Transmembrane regions (helical) follow at residues 45 to 65 (YLLS…FPYL), 72 to 92 (GAFL…LFFL), and 110 to 130 (ILPL…FVTI). Residues 131 to 234 (YYNVIIAYSL…RSSGMNETGV (104 aa)) lie on the Extracellular side of the membrane. 7 N-linked (GlcNAc...) asparagine glycosylation sites follow: N155, N163, N174, N189, N197, N202, and N230. The next 2 helical transmembrane spans lie at 235–255 (IVWY…AALF) and 261–281 (SGKV…ILLV). N302 carries an N-linked (GlcNAc...) asparagine glycan. A run of 7 helical transmembrane segments spans residues 315–335 (AATQ…ALSS), 348–368 (IVVC…IFSI), 399–419 (LAQL…LLTL), 450–477 (ITLG…VHLI), 480–500 (FCAG…IIWI), 528–548 (CWFV…LVQF), and 563–583 (VALG…MAII). Topologically, residues 584–642 (KIIQAKGNIFQRLISCCRPASNWGPYLEQHRGERYKDMVDPKKEADHEIPTVSGSRKPE) are cytoplasmic. Residues 622-632 (VDPKKEADHEI) show a composition bias toward basic and acidic residues. A disordered region spans residues 622–642 (VDPKKEADHEIPTVSGSRKPE).

It belongs to the sodium:neurotransmitter symporter (SNF) (TC 2.A.22) family. SLC6A14 subfamily. In terms of tissue distribution, levels are highest in adult and fetal lung, in trachea and salivary gland. Lower levels detected in mammary gland, stomach and pituitary gland, and very low levels in colon, uterus, prostate and testis.

It is found in the membrane. The protein resides in the apical cell membrane. It catalyses the reaction glycine(out) + chloride(out) + 2 Na(+)(out) = glycine(in) + chloride(in) + 2 Na(+)(in). The catalysed reaction is L-leucine(out) + chloride(out) + 2 Na(+)(out) = L-leucine(in) + chloride(in) + 2 Na(+)(in). The enzyme catalyses L-glutamine(out) + chloride(out) + 2 Na(+)(out) = L-glutamine(in) + chloride(in) + 2 Na(+)(in). It carries out the reaction L-arginine(out) + chloride(out) + 2 Na(+)(out) = L-arginine(in) + chloride(in) + 2 Na(+)(in). It catalyses the reaction (R)-carnitine(out) + chloride(out) + 2 Na(+)(out) = (R)-carnitine(in) + chloride(in) + 2 Na(+)(in). The catalysed reaction is O-butanoyl-(R)-carnitine(out) + chloride(out) + 2 Na(+)(out) = O-butanoyl-(R)-carnitine(in) + chloride(in) + 2 Na(+)(in). The enzyme catalyses O-propanoyl-(R)-carnitine(out) + chloride(out) + 2 Na(+)(out) = O-propanoyl-(R)-carnitine(in) + chloride(in) + 2 Na(+)(in). It carries out the reaction L-isoleucine(out) + chloride(out) + 2 Na(+)(out) = L-isoleucine(in) + chloride(in) + 2 Na(+)(in). It catalyses the reaction L-methionine(out) + chloride(out) + 2 Na(+)(out) = L-methionine(in) + chloride(in) + 2 Na(+)(in). The catalysed reaction is L-valine(out) + chloride(out) + 2 Na(+)(out) = L-valine(in) + chloride(in) + 2 Na(+)(in). The enzyme catalyses L-alanine(out) + chloride(out) + 2 Na(+)(out) = L-alanine(in) + chloride(in) + 2 Na(+)(in). It carries out the reaction L-serine(out) + chloride(out) + 2 Na(+)(out) = L-serine(in) + chloride(in) + 2 Na(+)(in). It catalyses the reaction L-cysteine(out) + chloride(out) + 2 Na(+)(out) = L-cysteine(in) + chloride(in) + 2 Na(+)(in). The catalysed reaction is L-asparagine(out) + chloride(out) + 2 Na(+)(out) = L-asparagine(in) + chloride(in) + 2 Na(+)(in). The enzyme catalyses L-threonine(out) + chloride(out) + 2 Na(+)(out) = L-threonine(in) + chloride(in) + 2 Na(+)(in). It carries out the reaction L-phenylalanine(out) + chloride(out) + 2 Na(+)(out) = L-phenylalanine(in) + chloride(in) + 2 Na(+)(in). It catalyses the reaction L-tryptophan(out) + chloride(out) + 2 Na(+)(out) = L-tryptophan(in) + chloride(in) + 2 Na(+)(in). The catalysed reaction is L-tyrosine(out) + chloride(out) + 2 Na(+)(out) = L-tyrosine(in) + chloride(in) + 2 Na(+)(in). The enzyme catalyses L-histidine(out) + chloride(out) + 2 Na(+)(out) = L-histidine(in) + chloride(in) + 2 Na(+)(in). It carries out the reaction L-lysine(out) + chloride(out) + 2 Na(+)(out) = L-lysine(in) + chloride(in) + 2 Na(+)(in). It catalyses the reaction beta-alanine(out) + chloride(out) + 2 Na(+)(out) = beta-alanine(in) + chloride(in) + 2 Na(+)(in). Functionally, amino acid transporter that plays an important role in the absorption of amino acids in the intestinal tract. Mediates the uptake of a broad range of neutral and cationic amino acids (with the exception of proline) in a Na(+)/Cl(-)-dependent manner. Transports non-alpha-amino acids such as beta-alanine with low affinity, and has a higher affinity for dipolar and cationic amino acids such as leucine and lysine. Can also transport carnitine, butirylcarnitine and propionylcarnitine coupled to the transmembrane gradients of Na(+) and Cl(-). In Homo sapiens (Human), this protein is Sodium- and chloride-dependent neutral and basic amino acid transporter B(0+).